The sequence spans 339 residues: Dihydroorotate dehydrogenase (quinone) (339 aa).

Residues alanine 62–lysine 66 and threonine 86 each bind FMN. Lysine 66 contributes to the substrate binding site. Asparagine 111–phenylalanine 115 contributes to the substrate binding site. Residues asparagine 139 and asparagine 172 each contribute to the FMN site. Asparagine 172 serves as a coordination point for substrate. Serine 175 acts as the Nucleophile in catalysis. Residue asparagine 177 coordinates substrate. Lysine 217 and threonine 245 together coordinate FMN. Asparagine 246–threonine 247 is a binding site for substrate. FMN contacts are provided by residues glycine 268, glycine 297, and phenylalanine 318–serine 319.

Belongs to the dihydroorotate dehydrogenase family. Type 2 subfamily. Monomer. FMN serves as cofactor.

It is found in the cell membrane. It carries out the reaction (S)-dihydroorotate + a quinone = orotate + a quinol. It functions in the pathway pyrimidine metabolism; UMP biosynthesis via de novo pathway; orotate from (S)-dihydroorotate (quinone route): step 1/1. In terms of biological role, catalyzes the conversion of dihydroorotate to orotate with quinone as electron acceptor. The polypeptide is Dihydroorotate dehydrogenase (quinone) (Shewanella halifaxensis (strain HAW-EB4)).